The primary structure comprises 121 residues: ORF8 protein (121 aa).

A signal peptide spans 1–15 (MKFLVFLGIITTVAA). Positions 19-121 (ECSLQSCTQH…HDVRVVLDFI (103 aa)) constitute an SARS ORF8 Ig-like domain. Cystine bridges form between Cys25–Cys90, Cys37–Cys102, and Cys61–Cys83. A glycan (N-linked (GlcNAc...) (complex) asparagine; by host) is linked at Asn78.

Homodimer. Interacts with host IL17RA. Interacts with host IL17RC. Interacts with host MHC-I. In terms of processing, glycosylated by the host when secreted via the conventional pathway. The glycosylated form cannot bind IL17A and would not participate in the cytokine storm.

It localises to the secreted. In terms of biological role, plays a role in modulating the host immune response. May act as a secreted virokine by mimicking interleukin-17A (IL17A), and thereby binding to the IL17RA receptor, leading to activation of the IL17 pathway and increased secretion of pro-inflammatory factors. Contributes to the cytokine storm during SARS-CoV-2 infection when secreted by unconventional pathway. May act by down-regulating major histocompability complex class I (MHC-I) at cell surface. May inhibit expression of some members of the IFN-stimulated gene (ISG) family including hosts IGF2BP1/ZBP1, MX1 and MX2, and DHX58. In Severe acute respiratory syndrome coronavirus 2 (2019-nCoV), this protein is ORF8 protein.